The primary structure comprises 87 residues: Prohibitin 1 (87 aa).

Threonine 8 carries the post-translational modification Phosphothreonine. An N6-acetyllysine modification is found at lysine 62. Tyrosine 83 carries the post-translational modification Phosphotyrosine.

This sequence belongs to the prohibitin family. In terms of assembly, the mitochondrial prohibitin complex consists of two subunits (PHB1 and PHB2), assembled into a membrane-associated ring-shaped supercomplex of approximately 1 mDa. Interacts with STOML2. Interacts with MAP1LC3B (membrane-bound form LC3-II); the interaction requires PHB2 and takes place upon Parkin-mediated mitochondrial damage. Interacts with STAT3 (unphosphorylated or phosphorylated at 'Ser-727'). Interacts with CLPB. Interacts with CD86 (via cytoplasmic domain); the interactions increases after priming with CD40.

Its subcellular location is the mitochondrion inner membrane. The protein localises to the nucleus. It is found in the cytoplasm. It localises to the cell membrane. Protein with pleiotropic attributes mediated in a cell-compartment- and tissue-specific manner, which include the plasma membrane-associated cell signaling functions, mitochondrial chaperone, and transcriptional co-regulator of transcription factors in the nucleus. Plays a role in adipose tissue and glucose homeostasis in a sex-specific manner. Contributes to pulmonary vascular remodeling by accelerating proliferation of pulmonary arterial smooth muscle cells. In terms of biological role, in the mitochondria, together with PHB2, forms large ring complexes (prohibitin complexes) in the inner mitochondrial membrane (IMM) and functions as a chaperone protein that stabilizes mitochondrial respiratory enzymes and maintains mitochondrial integrity in the IMM, which is required for mitochondrial morphogenesis, neuronal survival, and normal lifespan. The prohibitin complex, with DNAJC19, regulates cardiolipin remodeling and the protein turnover of OMA1 in a cardiolipin-binding manner. Regulates mitochondrial respiration activity playing a role in cellular aging. The prohibitin complex plays a role of mitophagy receptor involved in targeting mitochondria for autophagic degradation. Involved in mitochondrial-mediated antiviral innate immunity, activates RIG-I-mediated signal transduction and production of IFNB1 and proinflammatory cytokine IL6. Its function is as follows. In the nucleus, acts as a transcription coregulator, enhances promoter binding by TP53, a transcription factor it activates, but reduces the promoter binding by E2F1, a transcription factor it represses. Interacts with STAT3 to affect IL17 secretion in T-helper Th17 cells. Functionally, in the plasma membrane, cooperates with CD86 to mediate CD86-signaling in B lymphocytes that regulates the level of IgG1 produced through the activation of distal signaling intermediates. Upon CD40 engagement, required to activate NF-kappa-B signaling pathway via phospholipase C and protein kinase C activation. The sequence is that of Prohibitin 1 (PHB1) from Mesocricetus auratus (Golden hamster).